Reading from the N-terminus, the 30-residue chain is Cycloviolacin-O1 (30 aa).

Residues 1–30 constitute a cross-link (cyclopeptide (Gly-Asn)); it reads GIPCAESCVYIPCTVTALLGCSCSNRVCYN. Intrachain disulfides connect C4/C21, C8/C23, and C13/C28.

In terms of processing, this is a cyclic peptide. As to expression, expressed in leaves, petals, petioles and roots but not in runners (at protein level).

In terms of biological role, probably participates in a plant defense mechanism. The chain is Cycloviolacin-O1 from Viola odorata (Sweet violet).